A 58-amino-acid polypeptide reads, in one-letter code: MQKFMRLFFLGLFFILFMTTQIKADGCLTYDSLCSTMYDKCCTSMKCKGFFFGYCKSI.

The signal sequence occupies residues methionine 1–alanine 24. 3 cysteine pairs are disulfide-bonded: cysteine 27-cysteine 42, cysteine 34-cysteine 47, and cysteine 41-cysteine 55.

As to expression, abundantly expressed by teratocytes, which are extra-embryonic cells released by parasitoid wasps into their hosts during larval eclosion.

It localises to the secreted. In terms of biological role, this endoparasitoid wasp peptide has immununosuppressive and insecticidal activities. Suppress cellular immunity which is detectable as a reduction of hemocyte encapsulation in the host. In vivo, ingestion of this peptide (probably at excessive doses) increases larval mortality and reduces leaf consumption in both lepidopteran species D.saccharalis and S.frugiperda, which are permissive and non-permissive hosts for C.flavipes, respectively. In Cotesia flavipes (Parasitic wasp), this protein is Teratocyte protein CftICK-III.